Here is a 398-residue protein sequence, read N- to C-terminus: Probable pectate lyase P56 (398 aa).

The N-terminal stretch at 1 to 27 (MEYSYRTKINVLFIVLILFVFAALGTA) is a signal peptide. Residue Asn135 is glycosylated (N-linked (GlcNAc...) asparagine). Residues Asp192, Asp217, and Asp221 each contribute to the Ca(2+) site. A glycan (N-linked (GlcNAc...) asparagine) is linked at Asn228. Arg273 is an active-site residue.

It belongs to the polysaccharide lyase 1 family. The cofactor is Ca(2+). As to expression, expressed in anthers and pollen.

It catalyses the reaction Eliminative cleavage of (1-&gt;4)-alpha-D-galacturonan to give oligosaccharides with 4-deoxy-alpha-D-galact-4-enuronosyl groups at their non-reducing ends.. The protein operates within glycan metabolism; pectin degradation; 2-dehydro-3-deoxy-D-gluconate from pectin: step 2/5. Might be needed during pollen development and tube growth. The polypeptide is Probable pectate lyase P56 (LAT56) (Solanum lycopersicum (Tomato)).